Reading from the N-terminus, the 962-residue chain is Leucine--tRNA ligase (962 aa).

The short motif at 41–51 (PYLNGNLHAGH) is the 'HIGH' region element. The short motif at 631 to 635 (KMSKS) is the 'KMSKS' region element. ATP is bound at residue Lys634.

This sequence belongs to the class-I aminoacyl-tRNA synthetase family.

The protein resides in the cytoplasm. The enzyme catalyses tRNA(Leu) + L-leucine + ATP = L-leucyl-tRNA(Leu) + AMP + diphosphate. The protein is Leucine--tRNA ligase of Methanococcoides burtonii (strain DSM 6242 / NBRC 107633 / OCM 468 / ACE-M).